We begin with the raw amino-acid sequence, 418 residues long: MKATDLFHVTVLVAGALALEHQQPLIGDLSQDLNHIIDSSPLLSFHRALVQIPSISEHEKNVGEYVLDFLSSQNLTVEKQIVTPESDTEEERFNIYAYVGKNRQPDVLVTSHIDTVPPFIPYSLHAPTSDTSFIRTDLVIAGRGTVDAKASVAAIVFAALETLDENPNASIGLLFDVGEENSGVGMKHFSNSELNPTPPTYHTVIFGEPTELSLVAAHKGTLGFKLVAEGKAAHSGYPWLGESAISSLIPVLAHLDTLQDLPPEKGGLLRSETLGKSTLNIGRVHGGIAANVVPAHAEAAISVRLAAGTPEDTRTIIERAVAKVTSGDRSVYPDFGDRKAGAPPQYFDVDVDGFEVITVNYGTDAPALKIHDQRTQRVKRYLYGPGSILVAHADNEAITVGELEEAVRGYKRLIAASL.

An N-terminal signal peptide occupies residues 1–18; sequence MKATDLFHVTVLVAGALA. Asn74 carries an N-linked (GlcNAc...) asparagine glycan. Residue Asp147 coordinates Zn(2+). N-linked (GlcNAc...) asparagine glycosylation occurs at Asn168. Glu179 acts as the Proton acceptor in catalysis. A Zn(2+)-binding site is contributed by Glu180.

The protein belongs to the peptidase M20A family. Zn(2+) serves as cofactor.

Its subcellular location is the secreted. The chain is Probable carboxypeptidase AFLA_000940 from Aspergillus flavus (strain ATCC 200026 / FGSC A1120 / IAM 13836 / NRRL 3357 / JCM 12722 / SRRC 167).